A 197-amino-acid polypeptide reads, in one-letter code: RNA pyrophosphohydrolase (197 aa).

One can recognise a Nudix hydrolase domain in the interval 6–149 (GYRPNVGIVI…KRDVYRRAMK (144 aa)). Positions 38-59 (GGINEGETPEQAMFRELFEEVG) match the Nudix box motif. The interval 170–197 (ETKKAETGKKQPYYHKYAPQNKKGRKRR) is disordered.

Belongs to the Nudix hydrolase family. RppH subfamily. Requires a divalent metal cation as cofactor.

Its function is as follows. Accelerates the degradation of transcripts by removing pyrophosphate from the 5'-end of triphosphorylated RNA, leading to a more labile monophosphorylated state that can stimulate subsequent ribonuclease cleavage. This chain is RNA pyrophosphohydrolase, found in Actinobacillus succinogenes (strain ATCC 55618 / DSM 22257 / CCUG 43843 / 130Z).